A 168-amino-acid chain; its full sequence is D-aminoacyl-tRNA deacylase 2 (168 aa).

The Gly-transPro motif, allows the protein to recognize chirality of D-amino acids signature appears at 160-161 (GP).

Belongs to the DTD family. Homodimer.

It is found in the cytoplasm. It catalyses the reaction a D-aminoacyl-tRNA + H2O = a tRNA + a D-alpha-amino acid + H(+). The enzyme catalyses glycyl-tRNA(Ala) + H2O = tRNA(Ala) + glycine + H(+). The catalysed reaction is D-tyrosyl-tRNA(Tyr) + H2O = D-tyrosine + tRNA(Tyr). It carries out the reaction L-alanyl-tRNA(Thr) + H2O = tRNA(Thr) + L-alanine + H(+). In terms of biological role, deacylates mischarged D-aminoacyl-tRNAs. Also deacylates mischarged glycyl-tRNA(Ala), protecting cells against glycine mischarging by AlaRS. Probably acts by rejecting L-amino acids from its binding site rather than specific recognition of D-amino acids. Catalyzes the hydrolysis of D-tyrosyl-tRNA(Tyr), has no activity on correctly charged L-tyrosyl-tRNA(Tyr). By recycling D-aminoacyl-tRNA to D-amino acids and free tRNA molecules, this enzyme counteracts the toxicity associated with the formation of D-aminoacyl-tRNA entities in vivo and helps enforce protein L-homochirality. In contrast to DTD1, deacylates L-Ala mischarged on tRNA(Thr)(G4.U69) by alanine-tRNA ligase AARS. Can deacylate L-Ala due to a relaxed specificity for substrate chirality caused by the trans conformation of the Gly-Pro motif in the active site. Also hydrolyzes correctly charged, achiral, glycyl-tRNA(Gly) in vitro, although in vivo EEF1A1/EF-Tu may protect cognate achiral glycyl-tRNA(Gly) from DTD2-mediated deacetylation. This Homo sapiens (Human) protein is D-aminoacyl-tRNA deacylase 2 (DTD2).